A 239-amino-acid polypeptide reads, in one-letter code: tRNA (guanine-N(1)-)-methyltransferase (239 aa).

Residues Gly109 and 133-138 (IGDYVL) each bind S-adenosyl-L-methionine. 2 disordered regions span residues 163–187 (PASRHDDSHSPALDRRLEGPSYTRP) and 217–239 (QRTRERRPELLADPVGPQDDPGR). Composition is skewed to basic and acidic residues over residues 165-180 (SRHDDSHSPALDRRLE) and 217-226 (QRTRERRPEL).

Belongs to the RNA methyltransferase TrmD family. Homodimer.

Its subcellular location is the cytoplasm. It carries out the reaction guanosine(37) in tRNA + S-adenosyl-L-methionine = N(1)-methylguanosine(37) in tRNA + S-adenosyl-L-homocysteine + H(+). Functionally, specifically methylates guanosine-37 in various tRNAs. The protein is tRNA (guanine-N(1)-)-methyltransferase of Mycolicibacterium paratuberculosis (strain ATCC BAA-968 / K-10) (Mycobacterium paratuberculosis).